Consider the following 235-residue polypeptide: MDMSLVFFSQLNMCESKEKTFFKLMHGSGKEETSIEAKIRAKEKRNRLSLLLQRPDFHGETQASRSALLAKETRVSPEEAVKWAESFDKLLSHRDGVDAFTRFLKTEFSEENIEFWVACEDFKKCKEPQQIILKAKAIYEKFIQNDAPKEVNIDFHTKEVIAKSIAQPTLHSFDTAQSRVYQLMEHDSYKRFLKSETYLHLIEGRPQRPTNLRRRSRSFTYNDFQDVKSDVAIWL.

Position 49 is a phosphoserine (S49). Positions 86 to 202 constitute an RGS domain; sequence SFDKLLSHRD…LKSETYLHLI (117 aa). 2 positions are modified to phosphoserine: S216 and S218.

Expressed in bone marrow, spleen, fetal liver and lung. At very low levels expressed in heart.

It is found in the cytoplasm. Inhibits signal transduction by increasing the GTPase activity of G protein alpha subunits thereby driving them into their inactive GDP-bound form. Binds to G(i) alpha-1, G(i) alpha-2, G(i) alpha-3 and G(q) alpha. The protein is Regulator of G-protein signaling 18 (Rgs18) of Mus musculus (Mouse).